Consider the following 84-residue polypeptide: MAHKKGASSTRNGRDSNAQRLGVKRFGGQAVNAGEILVRQRGTHFHPGAGVGRGGDDTLFALQAGAVQFGTHRGRKVVNIVPVA.

Positions 1 to 22 are disordered; sequence MAHKKGASSTRNGRDSNAQRLG. Over residues 7 to 19 the composition is skewed to polar residues; sequence ASSTRNGRDSNAQ.

This sequence belongs to the bacterial ribosomal protein bL27 family.

This chain is Large ribosomal subunit protein bL27, found in Streptomyces coelicolor (strain ATCC BAA-471 / A3(2) / M145).